A 181-amino-acid polypeptide reads, in one-letter code: Peptide deformylase 2 (181 aa).

Positions 109 and 151 each coordinate Fe cation. Glutamate 152 is a catalytic residue. Position 155 (histidine 155) interacts with Fe cation.

Belongs to the polypeptide deformylase family. It depends on Fe(2+) as a cofactor.

The enzyme catalyses N-terminal N-formyl-L-methionyl-[peptide] + H2O = N-terminal L-methionyl-[peptide] + formate. In terms of biological role, removes the formyl group from the N-terminal Met of newly synthesized proteins. Requires at least a dipeptide for an efficient rate of reaction. N-terminal L-methionine is a prerequisite for activity but the enzyme has broad specificity at other positions. The polypeptide is Peptide deformylase 2 (Shewanella oneidensis (strain ATCC 700550 / JCM 31522 / CIP 106686 / LMG 19005 / NCIMB 14063 / MR-1)).